Consider the following 475-residue polypeptide: Protein ABCI7, chloroplastic (475 aa).

Residues 1 to 36 (MAAATVLGRLSLIPNLSSKPKLKSNRRTTSTSVSVR) constitute a chloroplast transit peptide.

As to quaternary structure, interacts with NAP7.

The protein localises to the plastid. It localises to the chloroplast. The protein is Protein ABCI7, chloroplastic (ABCI7) of Arabidopsis thaliana (Mouse-ear cress).